The chain runs to 1001 residues: Integrator complex subunit 7 (1001 aa).

The interval 980–1001 (DPSKQGAPAPSTSQAVGQTRRF) is disordered. Residues 989-1001 (PSTSQAVGQTRRF) are compositionally biased toward polar residues.

Belongs to the Integrator subunit 7 family. In terms of assembly, belongs to the multiprotein complex Integrator, at least composed of IntS1, IntS2, IntS3, IntS4, omd/IntS5, IntS6, defl/IntS7, IntS8, IntS9, IntS10, IntS11, IntS12, asun/IntS13, IntS14 and IntS15. The core complex associates with protein phosphatase 2A subunits mts/PP2A and Pp2A-29B, to form the Integrator-PP2A (INTAC) complex.

It localises to the nucleus. Its subcellular location is the cytoplasm. Functionally, component of the integrator complex, a multiprotein complex that terminates RNA polymerase II (Pol II) transcription in the promoter-proximal region of genes. The integrator complex provides a quality checkpoint during transcription elongation by driving premature transcription termination of transcripts that are unfavorably configured for transcriptional elongation: the complex terminates transcription by (1) catalyzing dephosphorylation of the C-terminal domain (CTD) of Pol II subunit Polr2A/Rbp1 and Spt5, and (2) degrading the exiting nascent RNA transcript via endonuclease activity. The integrator complex is also involved in the 3'-end processing of the U7 snRNA, and also the spliceosomal snRNAs U1, U2, U4 and U5. The chain is Integrator complex subunit 7 from Drosophila melanogaster (Fruit fly).